Consider the following 1128-residue polypeptide: MSRSVLQPSQQKLAEKLTILNDRGVGMLTRLYNIKKACGDPKAKPSYLIDKNLESAVKFIVRKFPAVETRNNNQQLAQLQKEKSEILKNLALYYFTFVDVMEFKDHVCDLLNTIDVCQVFFDITVNFDLTKNYLDLTVTYTTLMILLSRIEERKAIIGLYNYAHEMTHGASDREYPRLGQMIVDYEHPLKKMMEEFVPHSKSLSDALISLQMVYPRRNLSADQWRNAQLLSLISAPSTMLNPAQSDTMPCEYLSLDAMEKWIIFGFILCHGMLNTEATALNLWKLALQSSSCLSLFRDEVFHIHKAAEDLFVNIRGYNKRINDIRECKEAAVSHAGSMHRERRKFLRSALKELATVLSDQPGLLGPKALFVFMALSFARDEIIWLLRHADNMPKKSADDFIDKHIAELIFYMEELRAHVRKYGPVMQRYYVQYLSGFDAVVLNELVQNLSVCPEDESIIMSSFVNTMTSLSVKQVEDGEVFDFRGMRLDWFRLQAYTSVSKASLSLADHRELGKMMNTIIFHTKMVDSLVEMLVETSDLSIFCFYSRAFEKMFQQCLELPSQSRYSIAFPLLCTHFMSCTHELCPEERHHIGDRSLSLCNMFLDEMAKQARNLITDICTEQCTLSDQLLPKHCAKTISQAVNKKSKKQTGKKGEPEREKPGVESMRKNRLVVTNLDKLHTALSELCFSINYVPNMAVWEHTFTPREYLTSHLEIRFTKSIVGMTMYNQATQEIAKPSELLTSVREYMTVLQSIENYVQIDITRVFNNVLLQQTQHLDSHGEPTITSLYTNWYLETLLRQVSNGHIAYFPAMKAFVNLPTENELTFNAEEYSDISEMRSLSELLGPYGMKFLSESLMWHISSQVAELKKLVVENVDVLTQMRTSFDKPDQMAALFKRLSSVDSVLKRMTIIGVILSFRSLAQEALRDVLSYHIPFLVSSIEDFKDHIPRETDMKVAMNVYELSSAAGLPCEIDPALVVALSSQKSENISPEEEYKIACLLMVFVAVSLPTLASNVMSQYSPAIEGHCNNIHCLAKAINQIAAALFTIHKGSIEDRLKEFLALASSSLLKIGQETDKTTTRNRESVYLLLDMIVQESPFLTMDLLESCFPYVLLRNAYHAVYKQSVTSSA.

Serine 2 bears the N-acetylserine mark. The segment at 640 to 665 (AVNKKSKKQTGKKGEPEREKPGVESM) is disordered. Basic and acidic residues predominate over residues 651 to 665 (KKGEPEREKPGVESM). Residues 995–1015 (IACLLMVFVAVSLPTLASNVM) traverse the membrane as a helical segment.

Belongs to the HEM-1/HEM-2 family. In terms of assembly, component of the WAVE1 complex composed of ABI2, CYFIP1 or CYFIP2, BRK1, NCKAP1 and WASF1/WAVE1. Within the complex, a heterodimer containing NCKAP1 and CYFIP1 interacts with a heterotrimer formed by WAVE1, ABI2 and BRK1. Component of the WAVE2 complex composed of ABI1, CYFIP1/SRA1, NCKAP1/NAP1 and WASF2/WAVE2. CYFIP2 binds to activated RAC1 which causes the complex to dissociate, releasing activated WASF1. The complex can also be activated by NCK1. Associates preferentially with the first SH3 domain of NCK. Interacts with NYAP1, NYAP2 and MYO16. Interacts with TMEM132D. In terms of tissue distribution, preferentially expressed in brain, heart, liver and testis.

It is found in the cell membrane. The protein resides in the cell projection. It localises to the lamellipodium membrane. Its function is as follows. Part of the WAVE complex that regulates lamellipodia formation. The WAVE complex regulates actin filament reorganization via its interaction with the Arp2/3 complex. Actin remodeling activity is regulated by RAC1. As component of the WAVE1 complex, required for BDNF-NTRK2 endocytic trafficking and signaling from early endosomes. In Rattus norvegicus (Rat), this protein is Nck-associated protein 1 (Nckap1).